The primary structure comprises 66 residues: Gallinacin-8 (66 aa).

Residues 1–19 form the signal peptide; it reads MKILYLLLAVLLTVLQSSL. The propeptide occupies 20-25; that stretch reads GFMRVP. 3 disulfides stabilise this stretch: Cys31/Cys60, Cys38/Cys54, and Cys43/Cys61.

The protein belongs to the beta-defensin family. As to expression, expressed in the liver, kidney, gall bladder, testis, ovary and male and femae reproductive tracts. Expressed in the ovarian stroma and the theca and granulosa layers of the ovarian follicle.

The protein resides in the secreted. Its subcellular location is the cytoplasmic granule. Has bactericidal activity. The sequence is that of Gallinacin-8 (GAL8) from Gallus gallus (Chicken).